We begin with the raw amino-acid sequence, 383 residues long: Cell division protein FtsZ (383 aa).

GTP-binding positions include 20–24, 107–109, Glu138, Arg142, and Asn186; these read GGGGN and GTG.

This sequence belongs to the FtsZ family. As to quaternary structure, homodimer. Polymerizes to form a dynamic ring structure in a strictly GTP-dependent manner. Interacts directly with several other division proteins.

It localises to the cytoplasm. In terms of biological role, essential cell division protein that forms a contractile ring structure (Z ring) at the future cell division site. The regulation of the ring assembly controls the timing and the location of cell division. One of the functions of the FtsZ ring is to recruit other cell division proteins to the septum to produce a new cell wall between the dividing cells. Binds GTP and shows GTPase activity. This chain is Cell division protein FtsZ, found in Escherichia coli O157:H7.